Consider the following 194-residue polypeptide: Oligoribonuclease (194 aa).

Positions 11 to 174 (LIWIDLEMTG…SDVRDSIDEL (164 aa)) constitute an Exonuclease domain. Residue Tyr-132 is part of the active site.

Belongs to the oligoribonuclease family.

The protein resides in the cytoplasm. Its function is as follows. 3'-to-5' exoribonuclease specific for small oligoribonucleotides. This chain is Oligoribonuclease, found in Xanthomonas euvesicatoria pv. vesicatoria (strain 85-10) (Xanthomonas campestris pv. vesicatoria).